Consider the following 863-residue polypeptide: Valine--tRNA ligase (863 aa).

The short motif at 43 to 53 (PYPTGSFHIGH) is the 'HIGH' region element. Positions 517–521 (KMSKS) match the 'KMSKS' region motif. ATP is bound at residue Lys-520.

This sequence belongs to the class-I aminoacyl-tRNA synthetase family. ValS type 2 subfamily.

It localises to the cytoplasm. The catalysed reaction is tRNA(Val) + L-valine + ATP = L-valyl-tRNA(Val) + AMP + diphosphate. Catalyzes the attachment of valine to tRNA(Val). As ValRS can inadvertently accommodate and process structurally similar amino acids such as threonine, to avoid such errors, it has a 'posttransfer' editing activity that hydrolyzes mischarged Thr-tRNA(Val) in a tRNA-dependent manner. The protein is Valine--tRNA ligase of Archaeoglobus fulgidus (strain ATCC 49558 / DSM 4304 / JCM 9628 / NBRC 100126 / VC-16).